The chain runs to 213 residues: Na(+)-translocating NADH-quinone reductase subunit D (213 aa).

Transmembrane regions (helical) follow at residues 22–42 (LIAI…TTAL), 43–63 (TMGF…SLLR), 77–97 (IIIS…FFTI), 101–121 (LSVF…AESM), 131–151 (FLDG…ISII), and 183–203 (LGLM…IWIV).

The protein belongs to the NqrDE/RnfAE family. As to quaternary structure, composed of six subunits; NqrA, NqrB, NqrC, NqrD, NqrE and NqrF.

Its subcellular location is the cell inner membrane. The catalysed reaction is a ubiquinone + n Na(+)(in) + NADH + H(+) = a ubiquinol + n Na(+)(out) + NAD(+). Its function is as follows. NQR complex catalyzes the reduction of ubiquinone-1 to ubiquinol by two successive reactions, coupled with the transport of Na(+) ions from the cytoplasm to the periplasm. NqrA to NqrE are probably involved in the second step, the conversion of ubisemiquinone to ubiquinol. This chain is Na(+)-translocating NADH-quinone reductase subunit D, found in Chlamydia trachomatis serovar L2 (strain ATCC VR-902B / DSM 19102 / 434/Bu).